A 375-amino-acid chain; its full sequence is MLKVGILGSTGSVGSQALDVIRKYKDQIKVELLGASKLSENLINQIKEFKPSYVYVENAEEKSIDDIKVLVGEDGLRRAVNLDLDLFINAIAGIKGILPTYLLLKYNKTLATANKEAIICLGELLKDKYKKILPIDSEHSAIFQILKDSNQKEVRRIILTASGGPFVNMPAEDFENITVKQALIHPRWSMGKKITIDSATLMNKGLEVIEAHYLFSMPYEKIDVLIHPESIIHGMVEFVDGTVISNMSNPDMKIPISYALFYPERKFLSDNYLDFTKIKSLNFLKPDTEKFPLLKLAVECGKKGGVYPTVLTVADEIAVNYFLEERIKFTDIHKIILETLEKFDYNKLDSVDDIFYIIDKTINLATEIAKKYGST.

NADPH contacts are provided by threonine 10, glycine 11, serine 12, valine 13, lysine 37, and asparagine 114. Lysine 115 provides a ligand contact to 1-deoxy-D-xylulose 5-phosphate. An NADPH-binding site is contributed by glutamate 116. Aspartate 136 provides a ligand contact to Mn(2+). 1-deoxy-D-xylulose 5-phosphate contacts are provided by serine 137, glutamate 138, serine 162, and histidine 185. Position 138 (glutamate 138) interacts with Mn(2+). An NADPH-binding site is contributed by glycine 191. Residues serine 198, asparagine 203, lysine 204, and glutamate 207 each coordinate 1-deoxy-D-xylulose 5-phosphate. Glutamate 207 is a binding site for Mn(2+).

The protein belongs to the DXR family. Mg(2+) serves as cofactor. Mn(2+) is required as a cofactor.

The catalysed reaction is 2-C-methyl-D-erythritol 4-phosphate + NADP(+) = 1-deoxy-D-xylulose 5-phosphate + NADPH + H(+). It functions in the pathway isoprenoid biosynthesis; isopentenyl diphosphate biosynthesis via DXP pathway; isopentenyl diphosphate from 1-deoxy-D-xylulose 5-phosphate: step 1/6. Its function is as follows. Catalyzes the NADPH-dependent rearrangement and reduction of 1-deoxy-D-xylulose-5-phosphate (DXP) to 2-C-methyl-D-erythritol 4-phosphate (MEP). This is 1-deoxy-D-xylulose 5-phosphate reductoisomerase from Sulfurihydrogenibium sp. (strain YO3AOP1).